The following is a 455-amino-acid chain: MVVLNPMTLGIYLQLFFLSIVSQPTFINSVLPISAALPSLDQKKRGGHKACCLLTPPPPPLFPPPFFRGGRSPLLSPDMKNLMLELETSQSPCMQGSLGSPGPPGPQGPPGLPGKTGPKGEKGELGRPGRKGRPGPPGVPGMPGPIGWPGPEGPRGEKGDLGMMGLPGSRGPMGSKGYPGSRGEKGSRGEKGDLGPKGEKGFPGFPGMLGQKGEMGPKGEPGIAGHRGPTGRPGKRGKQGQKGDSGVMGPPGKPGPSGQPGRPGPPGPPPAGQLIMGPKGERGFPGPPGRCLCGPTMNVNNPSYGESVYGPSSPRVPVIFVVNNQEELERLNTQNAIAFRRDQRSLYFKDSLGWLPIQLTPFYPVDYTADQHGTCGDGLLQPGEECDDGNSDVGDDCIRCHRAYCGDGHRHEGVEDCDGSDFGYLTCETYLPGSYGDLQCTQYCYIDSTPCRYFT.

A signal peptide spans 1–22 (MVVLNPMTLGIYLQLFFLSIVS). The segment at 51-67 (CCLLTPPPPPLFPPPFF) is PRAD. The tract at residues 90–282 (QSPCMQGSLG…QLIMGPKGER (193 aa)) is disordered. Collagen-like domains lie at 96 to 269 (GSLG…PGPP) and 277 to 291 (GPKG…PGRC). Pro residues predominate over residues 101–112 (PGPPGPQGPPGL). Positions 118-127 (PKGEKGELGR) are enriched in basic and acidic residues. Residues 130–133 (RKGR) are heparan sulfate proteoglycan binding. A compositionally biased stretch (pro residues) spans 134–152 (PGPPGVPGMPGPIGWPGPE). Basic and acidic residues predominate over residues 182 to 200 (RGEKGSRGEKGDLGPKGEK). The tract at residues 235 to 238 (KRGK) is heparan sulfate proteoglycan binding. The segment covering 262–271 (RPGPPGPPPA) has biased composition (pro residues).

This sequence belongs to the COLQ family. As to quaternary structure, homotrimer. Component of the asymmetric form of AChE, a disulfide-bonded oligomer composed of the collagenic subunits (Q) and a variable number of asymmetric catalytic subunits (T). The N-terminal of a collagenic subunit (Q) associates with the C-terminal of a catalytic subunit (T). Post-translationally, the triple-helical tail is stabilized by disulfide bonds at each end. As to expression, found at the end plate of skeletal muscle.

It localises to the synapse. Its function is as follows. Anchors the catalytic subunits of asymmetric AChE to the synaptic basal lamina. This chain is Acetylcholinesterase collagenic tail peptide (COLQ), found in Homo sapiens (Human).